The sequence spans 129 residues: Fluoride-specific ion channel FluC (129 aa).

4 helical membrane passes run 4–24 (VLIVMLGGFIGANLRYWLGEW), 30–50 (GFPTGTFVINAIGCFLLGWLL), 63–83 (WSLLLGTGLIGSFTTFSTFSV), and 95–115 (IVASLYVFGSIFLGIGLAYIG). The Na(+) site is built by Gly73 and Thr76.

This sequence belongs to the fluoride channel Fluc/FEX (TC 1.A.43) family.

It is found in the cell membrane. It catalyses the reaction fluoride(in) = fluoride(out). With respect to regulation, na(+) is not transported, but it plays an essential structural role and its presence is essential for fluoride channel function. Its function is as follows. Fluoride-specific ion channel. Important for reducing fluoride concentration in the cell, thus reducing its toxicity. The chain is Fluoride-specific ion channel FluC from Oceanobacillus iheyensis (strain DSM 14371 / CIP 107618 / JCM 11309 / KCTC 3954 / HTE831).